Consider the following 202-residue polypeptide: Dephospho-CoA kinase (202 aa).

The region spanning 5-202 (IVGLTGGIAS…DADYRARSDR (198 aa)) is the DPCK domain. 13 to 18 (ASGKSA) provides a ligand contact to ATP.

This sequence belongs to the CoaE family.

The protein resides in the cytoplasm. The enzyme catalyses 3'-dephospho-CoA + ATP = ADP + CoA + H(+). Its pathway is cofactor biosynthesis; coenzyme A biosynthesis; CoA from (R)-pantothenate: step 5/5. Catalyzes the phosphorylation of the 3'-hydroxyl group of dephosphocoenzyme A to form coenzyme A. This chain is Dephospho-CoA kinase, found in Xanthomonas oryzae pv. oryzae (strain MAFF 311018).